The primary structure comprises 1208 residues: Calmodulin-binding transcription activator 2 (1208 aa).

The segment at residues 30 to 160 (RCPLLPPERL…YLNVPALEDC (131 aa)) is a DNA-binding region (CG-1). Residues 78–86 (NRKKVKYRK) carry the Nuclear localization signal motif. Disordered stretches follow at residues 269 to 328 (ISHS…SRGG), 366 to 418 (VGSE…PCPA), and 437 to 507 (QLGA…ELEP). The segment covering 275–288 (PEPPPLIAPLPPEL) has biased composition (pro residues). 2 stretches are compositionally biased toward low complexity: residues 294 to 305 (SPSSSSSSSSSS) and 319 to 328 (TSRGGSSRGG). Composition is skewed to pro residues over residues 371-380 (SAPPAPPSPA) and 464-476 (TVPPVPSSPPSSP). The region spanning 544–622 (DFSPEWSYPE…LSASVLFEYR (79 aa)) is the IPT/TIG domain. 3 ANK repeats span residues 717–750 (RGMSLLHLAAAQGYARLIETLSQWRSVETGSLDL), 762–792 (FSCTPLMWACALGHLEAAVLLFCWNRQALSI), and 796–826 (LGRLPLSVAHSRGHVRLARCLEELQRQELSV). Disordered regions lie at residues 826 to 881 (VEHP…ASDI) and 908 to 936 (NSKEPAPSPCGPPLAQDNGAAPEDADSPP). The segment covering 829–853 (PLALSPPSSSPDTGLSSASSPSELS) has biased composition (low complexity). IQ domains lie at 1054 to 1083 (LYEAARVIQTAFRKYKGRRLKEQQEVAAAV) and 1107 to 1136 (MTQAAILIQSKFRSYYEQKRFQQSRRAAVL). A disordered region spans residues 1144–1166 (YRRRPGPPHRPSGPLPARNKGTF).

This sequence belongs to the CAMTA family. In terms of assembly, may interact with calmodulin.

It is found in the nucleus. Functionally, transcription activator. May act as tumor suppressor. This Mus musculus (Mouse) protein is Calmodulin-binding transcription activator 2 (Camta2).